We begin with the raw amino-acid sequence, 79 residues long: UPF0337 protein YhjA (79 aa).

The interval 1-30 (MALNDKLDATKDKVSGKVKETTGKVTGDEK) is disordered.

Belongs to the UPF0337 (CsbD) family.

The protein is UPF0337 protein YhjA (yhjA) of Lactococcus lactis subsp. lactis (strain IL1403) (Streptococcus lactis).